Consider the following 241-residue polypeptide: Probable transcriptional regulatory protein RALTA_A0859 (241 aa).

The protein belongs to the TACO1 family.

The protein localises to the cytoplasm. This Cupriavidus taiwanensis (strain DSM 17343 / BCRC 17206 / CCUG 44338 / CIP 107171 / LMG 19424 / R1) (Ralstonia taiwanensis (strain LMG 19424)) protein is Probable transcriptional regulatory protein RALTA_A0859.